We begin with the raw amino-acid sequence, 1001 residues long: Ribonuclease E/G-like protein, chloroplastic (1001 aa).

The N-terminal 48 residues, M1–L48, are a transit peptide targeting the chloroplast. The CBM20 domain occupies S76 to S185. Residue D755 coordinates Mg(2+). Positions Q769–R789 form a coiled coil. Position 800 (D800) interacts with Mg(2+). Positions 858 and 861 each coordinate Zn(2+).

Belongs to the RNase E/G family. As to quaternary structure, part of a chloroplastic degradosome-like complex. Interacts with RHON1. A homotetramer formed by a dimer of dimers. Requires Mg(2+) as cofactor. It depends on Zn(2+) as a cofactor. Expressed in cotyledons, rosette and cauline leaves.

Its subcellular location is the plastid. It is found in the chloroplast stroma. In terms of biological role, involved in intercistronic processing of primary transcripts from chloroplast operons. The endonucleolytic activity of the enzyme depends on the number of phosphates at the 5' end, is inhibited by structured RNA, and preferentially cleaves A/U-rich sequences. The protein is Ribonuclease E/G-like protein, chloroplastic (RNE) of Arabidopsis thaliana (Mouse-ear cress).